The following is a 371-amino-acid chain: MSLENKNIIITAGGTGGHIYPALAIAELLRQNKANVTWVGTPNNMEASIVPEYFNIQFIKSSGVRRKGIIKKITFPLKLAYNTLKSRSLLKKLKADLVIGFGGYVSGPICLAAAQINIPVIIHEQNAKIGLTNRILAKFATTICLAFEIENLHKQFSSKQLAKTKIVGNPVRKEIVALNDKARIYTDSSTLKILVLGGSQGAKAINEIIPKLIQKSNEQGINIKVWHQTGKLSLEETKDAYKDISQNHIKDIAAFIDDMAIAYNWADLVICRAGALTVSECAIAGLPAIFIPLPSAVDDHQFFNAQNIVNNNAGFCLRQQQMTLENLLAIIKPLNQDRSKLEQMSKMAKKTLIKNSSEQILDCVKKILNNK.

UDP-N-acetyl-alpha-D-glucosamine is bound by residues threonine 15–glycine 17, asparagine 126, arginine 172, serine 199, isoleucine 256, alanine 275–glutamate 280, and glutamine 301.

It belongs to the glycosyltransferase 28 family. MurG subfamily.

Its subcellular location is the cell inner membrane. It catalyses the reaction di-trans,octa-cis-undecaprenyl diphospho-N-acetyl-alpha-D-muramoyl-L-alanyl-D-glutamyl-meso-2,6-diaminopimeloyl-D-alanyl-D-alanine + UDP-N-acetyl-alpha-D-glucosamine = di-trans,octa-cis-undecaprenyl diphospho-[N-acetyl-alpha-D-glucosaminyl-(1-&gt;4)]-N-acetyl-alpha-D-muramoyl-L-alanyl-D-glutamyl-meso-2,6-diaminopimeloyl-D-alanyl-D-alanine + UDP + H(+). It functions in the pathway cell wall biogenesis; peptidoglycan biosynthesis. Functionally, cell wall formation. Catalyzes the transfer of a GlcNAc subunit on undecaprenyl-pyrophosphoryl-MurNAc-pentapeptide (lipid intermediate I) to form undecaprenyl-pyrophosphoryl-MurNAc-(pentapeptide)GlcNAc (lipid intermediate II). The chain is UDP-N-acetylglucosamine--N-acetylmuramyl-(pentapeptide) pyrophosphoryl-undecaprenol N-acetylglucosamine transferase from Francisella tularensis subsp. tularensis (strain FSC 198).